Consider the following 276-residue polypeptide: CTD small phosphatase-like protein (276 aa).

Residues 1–31 are disordered; that stretch reads MDGPAIITQVTNPKEDEARSPVAGEKASQRN. The FCP1 homology domain occupies 102 to 260; sequence LDYGKKCVVI…LDLIPFFEGL (159 aa). Aspartate 112 functions as the 4-aspartylphosphate intermediate in the catalytic mechanism. Residues aspartate 112, aspartate 114, and asparagine 223 each coordinate Mg(2+). Catalysis depends on aspartate 114, which acts as the Proton donor.

Monomer. Interacts with REST. Mg(2+) is required as a cofactor.

It localises to the nucleus. The catalysed reaction is O-phospho-L-seryl-[protein] + H2O = L-seryl-[protein] + phosphate. The enzyme catalyses O-phospho-L-threonyl-[protein] + H2O = L-threonyl-[protein] + phosphate. Its function is as follows. Preferentially catalyzes the dephosphorylation of 'Ser-5' within the tandem 7 residue repeats in the C-terminal domain (CTD) of the largest RNA polymerase II subunit POLR2A. Negatively regulates RNA polymerase II transcription, possibly by controlling the transition from initiation/capping to processive transcript elongation. Recruited by REST to neuronal genes that contain RE-1 elements, leading to neuronal gene silencing in non-neuronal cells. This Mus musculus (Mouse) protein is CTD small phosphatase-like protein (Ctdspl).